The chain runs to 447 residues: GTPase Era, mitochondrial (447 aa).

Residues 1 to 18 (MTLRSCETFLRRSLRFST) constitute a mitochondrion transit peptide. The region spanning 109–340 (KSLKVAIVGS…RYLFVAAKPC (232 aa)) is the Era-type G domain. Positions 117–124 (GSPNAGKS) are G1. 117–124 (GSPNAGKS) is a GTP binding site. The G2 stretch occupies residues 143–147 (HTTRS). A G3 region spans residues 164–167 (DTPG). Residues 164-168 (DTPGL) and 233-236 (NKVD) each bind GTP. A G4 region spans residues 233–236 (NKVD). The interval 318–320 (LSS) is G5. Residues 370 to 447 (LPKEVPYTMT…RLKISVKLRK (78 aa)) form the KH type-2 domain.

Belongs to the TRAFAC class TrmE-Era-EngA-EngB-Septin-like GTPase superfamily. Era GTPase family.

It is found in the mitochondrion matrix. Its subcellular location is the mitochondrion inner membrane. Functionally, probable GTPase that plays a role in the mitochondrial ribosomal small subunit assembly. Specifically binds the 12S mitochondrial rRNA (12S mt-rRNA) to a 33 nucleotide section delineating the 3' terminal stem-loop region. May act as a chaperone that protects the 12S mt-rRNA on the 28S mitoribosomal subunit during ribosomal small subunit assembly. In Danio rerio (Zebrafish), this protein is GTPase Era, mitochondrial (eral1).